We begin with the raw amino-acid sequence, 500 residues long: Probable malate:quinone oxidoreductase (500 aa).

The protein belongs to the MQO family. It depends on FAD as a cofactor.

The enzyme catalyses (S)-malate + a quinone = a quinol + oxaloacetate. It functions in the pathway carbohydrate metabolism; tricarboxylic acid cycle; oxaloacetate from (S)-malate (quinone route): step 1/1. The sequence is that of Probable malate:quinone oxidoreductase from Bacillus cytotoxicus (strain DSM 22905 / CIP 110041 / 391-98 / NVH 391-98).